The chain runs to 74 residues: Tetrahydromethanopterin S-methyltransferase subunit G (74 aa).

The helical transmembrane segment at Ile-50 to Gly-70 threads the bilayer.

Belongs to the MtrG family. The complex is composed of 8 subunits; MtrA, MtrB, MtrC, MtrD, MtrE, MtrF, MtrG and MtrH.

It localises to the cell membrane. The catalysed reaction is 5-methyl-5,6,7,8-tetrahydromethanopterin + coenzyme M + 2 Na(+)(in) = 5,6,7,8-tetrahydromethanopterin + methyl-coenzyme M + 2 Na(+)(out). It functions in the pathway one-carbon metabolism; methanogenesis from CO(2); methyl-coenzyme M from 5,10-methylene-5,6,7,8-tetrahydromethanopterin: step 2/2. Part of a complex that catalyzes the formation of methyl-coenzyme M and tetrahydromethanopterin from coenzyme M and methyl-tetrahydromethanopterin. This is an energy-conserving, sodium-ion translocating step. This is Tetrahydromethanopterin S-methyltransferase subunit G from Methanopyrus kandleri (strain AV19 / DSM 6324 / JCM 9639 / NBRC 100938).